Here is a 412-residue protein sequence, read N- to C-terminus: Multifunctional CCA protein (412 aa).

Residues G8 and R11 each coordinate ATP. Positions 8 and 11 each coordinate CTP. Mg(2+)-binding residues include D21 and D23. The ATP site is built by R91, R137, and R140. CTP is bound by residues R91, R137, and R140. The 102-residue stretch at 228–329 folds into the HD domain; it reads TGIHTLMTLS…VKLFDSIDAW (102 aa).

Belongs to the tRNA nucleotidyltransferase/poly(A) polymerase family. Bacterial CCA-adding enzyme type 1 subfamily. In terms of assembly, monomer. Can also form homodimers and oligomers. The cofactor is Mg(2+). It depends on Ni(2+) as a cofactor.

The catalysed reaction is a tRNA precursor + 2 CTP + ATP = a tRNA with a 3' CCA end + 3 diphosphate. The enzyme catalyses a tRNA with a 3' CCA end + 2 CTP + ATP = a tRNA with a 3' CCACCA end + 3 diphosphate. Functionally, catalyzes the addition and repair of the essential 3'-terminal CCA sequence in tRNAs without using a nucleic acid template. Adds these three nucleotides in the order of C, C, and A to the tRNA nucleotide-73, using CTP and ATP as substrates and producing inorganic pyrophosphate. tRNA 3'-terminal CCA addition is required both for tRNA processing and repair. Also involved in tRNA surveillance by mediating tandem CCA addition to generate a CCACCA at the 3' terminus of unstable tRNAs. While stable tRNAs receive only 3'-terminal CCA, unstable tRNAs are marked with CCACCA and rapidly degraded. This Escherichia coli O139:H28 (strain E24377A / ETEC) protein is Multifunctional CCA protein.